The following is a 418-amino-acid chain: ATP phosphoribosyltransferase regulatory subunit (418 aa).

Belongs to the class-II aminoacyl-tRNA synthetase family. HisZ subfamily. Heteromultimer composed of HisG and HisZ subunits.

The protein localises to the cytoplasm. Its pathway is amino-acid biosynthesis; L-histidine biosynthesis; L-histidine from 5-phospho-alpha-D-ribose 1-diphosphate: step 1/9. Its function is as follows. Required for the first step of histidine biosynthesis. May allow the feedback regulation of ATP phosphoribosyltransferase activity by histidine. The sequence is that of ATP phosphoribosyltransferase regulatory subunit from Acetivibrio thermocellus (strain ATCC 27405 / DSM 1237 / JCM 9322 / NBRC 103400 / NCIMB 10682 / NRRL B-4536 / VPI 7372) (Clostridium thermocellum).